A 514-amino-acid chain; its full sequence is Histidine ammonia-lyase (514 aa).

Residues 144 to 146 (ASG) constitute a cross-link (5-imidazolinone (Ala-Gly)). Position 145 is a 2,3-didehydroalanine (Ser) (S145).

This sequence belongs to the PAL/histidase family. In terms of processing, contains an active site 4-methylidene-imidazol-5-one (MIO), which is formed autocatalytically by cyclization and dehydration of residues Ala-Ser-Gly.

Its subcellular location is the cytoplasm. It catalyses the reaction L-histidine = trans-urocanate + NH4(+). Its pathway is amino-acid degradation; L-histidine degradation into L-glutamate; N-formimidoyl-L-glutamate from L-histidine: step 1/3. The sequence is that of Histidine ammonia-lyase from Rhodospirillum rubrum (strain ATCC 11170 / ATH 1.1.1 / DSM 467 / LMG 4362 / NCIMB 8255 / S1).